The sequence spans 282 residues: uncharacterized protein (282 aa).

Transmembrane regions (helical) follow at residues 130–150 (WALLCVGIAQIALGTVQGFGL), 170–190 (STSWSIALGVIMVGAALWPSA), 191–211 (AAGLAGVLTAFVAILTGYVIV), and 223–243 (ILTHLPVVIGAVLAIMVWRSA). The interval 263–282 (DNASRGRRRGHLWPTDGSAA) is disordered.

It is found in the cell membrane. This is an uncharacterized protein from Mycobacterium tuberculosis (strain CDC 1551 / Oshkosh).